Here is a 209-residue protein sequence, read N- to C-terminus: 3-demethoxyubiquinol 3-hydroxylase (209 aa).

Residues Glu58, Glu88, His91, Glu140, Glu172, and His175 each contribute to the Fe cation site.

It belongs to the COQ7 family. Fe cation is required as a cofactor.

It localises to the cell membrane. The catalysed reaction is a 5-methoxy-2-methyl-3-(all-trans-polyprenyl)benzene-1,4-diol + AH2 + O2 = a 3-demethylubiquinol + A + H2O. The protein operates within cofactor biosynthesis; ubiquinone biosynthesis. Catalyzes the hydroxylation of 2-nonaprenyl-3-methyl-6-methoxy-1,4-benzoquinol during ubiquinone biosynthesis. This Polynucleobacter asymbioticus (strain DSM 18221 / CIP 109841 / QLW-P1DMWA-1) (Polynucleobacter necessarius subsp. asymbioticus) protein is 3-demethoxyubiquinol 3-hydroxylase.